Here is a 229-residue protein sequence, read N- to C-terminus: DNA mismatch repair protein MutH (229 aa).

Belongs to the MutH family.

Its subcellular location is the cytoplasm. Sequence-specific endonuclease that cleaves unmethylated GATC sequences. It is involved in DNA mismatch repair. This is DNA mismatch repair protein MutH from Shigella dysenteriae serotype 1 (strain Sd197).